The sequence spans 287 residues: MDQPKAVAPNAVVEIKTPTGAPVRIGNGEKLSIIAGPCQMESRQHALETAHALKEMADRLGVGLIYKTSYDKANRTSANAQRGIGLKDSLAIFQEIREVTGLPTLTDVHETSHCSIVAEAVDVIQIPAFLCRQTDLLVAAASTGRAINIKKGQFLAPWDMKNVIAKVTGAGNPNVMACERGASFGYNTLVSDMRALPIMKEIGCPVVFDATHSVQQPGGQGTSSGGQREFVPTLARAAVAVGVACVFIETHPDPDNAPSDGPNMVPVKEFEALVANLLRYDALTKAA.

The protein belongs to the KdsA family.

Its subcellular location is the cytoplasm. The catalysed reaction is D-arabinose 5-phosphate + phosphoenolpyruvate + H2O = 3-deoxy-alpha-D-manno-2-octulosonate-8-phosphate + phosphate. Its pathway is carbohydrate biosynthesis; 3-deoxy-D-manno-octulosonate biosynthesis; 3-deoxy-D-manno-octulosonate from D-ribulose 5-phosphate: step 2/3. It participates in bacterial outer membrane biogenesis; lipopolysaccharide biosynthesis. This Caulobacter vibrioides (strain ATCC 19089 / CIP 103742 / CB 15) (Caulobacter crescentus) protein is 2-dehydro-3-deoxyphosphooctonate aldolase.